A 179-amino-acid chain; its full sequence is Casparian strip membrane protein 1 (179 aa).

At 1–17 the chain is on the cytoplasmic side; the sequence is MKAGPLQLGVVPPANRA. Residues 18-38 traverse the membrane as a helical segment; the sequence is IAILDFFLRPIAIVGTLASAI. Over 39 to 67 the chain is Extracellular; the sequence is AMATTNQTLPFFSQFIRFRAKFNDLPSFT. An N-linked (GlcNAc...) asparagine glycan is attached at Asn44. Residues 68–88 traverse the membrane as a helical segment; that stretch reads FFVVASSIVSAYLILSLGFSI. Over 89–100 the chain is Cytoplasmic; that stretch reads LHIAKSNLVNSR. A helical membrane pass occupies residues 101–121; the sequence is VLLLLLDTAAMGLLMAGSAAA. Over 122 to 154 the chain is Extracellular; sequence TAIVQLAHKGNNKVNWFAICQQYNSFCKRVSGS. Residues 155–175 form a helical membrane-spanning segment; the sequence is LIGSYAGVVVLILLILLSGVA. The Cytoplasmic segment spans residues 176 to 179; it reads LSRR.

This sequence belongs to the Casparian strip membrane proteins (CASP) family. Homodimer and heterodimers.

Its subcellular location is the cell membrane. Functionally, regulates membrane-cell wall junctions and localized cell wall deposition. Required for establishment of the Casparian strip membrane domain (CSD) and the subsequent formation of Casparian strips, a cell wall modification of the root endodermis that determines an apoplastic barrier between the intraorganismal apoplasm and the extraorganismal apoplasm and prevents lateral diffusion. The sequence is that of Casparian strip membrane protein 1 from Lactuca sativa (Garden lettuce).